Consider the following 117-residue polypeptide: uncharacterized protein (117 aa).

Residues 10–32 (VCYLGDIAASGFLNSIATALIAV) traverse the membrane as a helical segment.

The protein localises to the membrane. This is an uncharacterized protein from Rickettsia conorii (strain ATCC VR-613 / Malish 7).